We begin with the raw amino-acid sequence, 265 residues long: 3-methyl-2-oxobutanoate hydroxymethyltransferase (265 aa).

2 residues coordinate Mg(2+): Asp43 and Asp82. 3-methyl-2-oxobutanoate-binding positions include 43–44 (DS), Asp82, and Lys111. Glu113 serves as a coordination point for Mg(2+). The active-site Proton acceptor is the Glu180.

This sequence belongs to the PanB family. As to quaternary structure, homodecamer; pentamer of dimers. It depends on Mg(2+) as a cofactor.

Its subcellular location is the cytoplasm. The enzyme catalyses 3-methyl-2-oxobutanoate + (6R)-5,10-methylene-5,6,7,8-tetrahydrofolate + H2O = 2-dehydropantoate + (6S)-5,6,7,8-tetrahydrofolate. The protein operates within cofactor biosynthesis; (R)-pantothenate biosynthesis; (R)-pantoate from 3-methyl-2-oxobutanoate: step 1/2. Its function is as follows. Catalyzes the reversible reaction in which hydroxymethyl group from 5,10-methylenetetrahydrofolate is transferred onto alpha-ketoisovalerate to form ketopantoate. The chain is 3-methyl-2-oxobutanoate hydroxymethyltransferase from Francisella tularensis subsp. holarctica (strain OSU18).